A 189-amino-acid polypeptide reads, in one-letter code: Elongation factor P (189 aa).

The protein belongs to the elongation factor P family.

It is found in the cytoplasm. The protein operates within protein biosynthesis; polypeptide chain elongation. Its function is as follows. Involved in peptide bond synthesis. Stimulates efficient translation and peptide-bond synthesis on native or reconstituted 70S ribosomes in vitro. Probably functions indirectly by altering the affinity of the ribosome for aminoacyl-tRNA, thus increasing their reactivity as acceptors for peptidyl transferase. The chain is Elongation factor P from Pseudomonas syringae pv. tomato (strain ATCC BAA-871 / DC3000).